The chain runs to 673 residues: Cell division cycle protein 23 homolog (673 aa).

TPR repeat units follow at residues 86 to 120 (AEMW…VLDN), 159 to 195 (NKEF…YQEH), 232 to 267 (EDVW…EPRI), 332 to 365 (PMII…DPYR), 400 to 433 (WETC…NPGL), 434 to 467 (AALW…DPAD), 469 to 501 (RGWY…KPHD), 502 to 535 (SRLL…GDVE), 539 to 572 (LWSL…VTSA), and 577 to 610 (IYAI…ETLC). A disordered region spans residues 628 to 673 (SRLPVEEAPGPSNASAAGGQEAMDTEEAPQEGGEEEMSEGEDDFSF). Low complexity predominate over residues 635 to 646 (APGPSNASAAGG). Over residues 650–673 (MDTEEAPQEGGEEEMSEGEDDFSF) the composition is skewed to acidic residues.

The protein belongs to the APC8/CDC23 family. The APC/C complex is probably composed of at least 12 subunits: apc-2, apc-10, apc-11, cdc-26, emb-1, emb-27, emb-30, mat-1, mat-2, mat-3, such-1 and gfi-3.

It functions in the pathway protein modification; protein ubiquitination. Probable component of the anaphase promoting complex/cyclosome (APC/C), a cell cycle-regulated E3 ubiquitin ligase that controls progression through mitosis and the G1 phase of the cell cycle. The APC/C complex acts by mediating ubiquitination and subsequent degradation of target proteins. Developmental role in early embryogenesis and the metaphase to anaphase transition in oocyte and spermatocyte meiosis and mitosis in germ cells. Required for embryonic anterior-posterior axis formation. Plays a role in regulating the abundance of glr-1 receptors in postmitotic neurons, which may in turn control animal locomotion. Involved in regulating GABA neurotransmitter release at neuromuscular junctions in GABA motor neurons. This Caenorhabditis elegans protein is Cell division cycle protein 23 homolog.